The sequence spans 137 residues: Protein LTO1 homolog (137 aa).

A2 carries the N-acetylalanine modification. A Phosphoserine modification is found at S4. The tract at residues 22–58 (GYREGYEEGSSLGVMEGRQHGTLHGAKIGSEIGCYQG) is deca-GX3 motif; required for interaction with YAE1 and the CIA complex.

The protein belongs to the LTO1 family. Forms a complex with YAE1. Interacts with PYCR1 and PYCR2. Widely expressed. Highly expressed in placenta, kidney and skeletal muscle.

It localises to the nucleus. Its function is as follows. The complex LTO1:YAE1 functions as a target specific adapter that probably recruits apo-ABCE1 to the cytosolic iron-sulfur protein assembly (CIA) complex machinery. May be required for biogenesis of the large ribosomal subunit and initiation of translation. May play a role in the regulation of proline metabolism and ROS production. The sequence is that of Protein LTO1 homolog from Homo sapiens (Human).